The chain runs to 200 residues: Phospholipase A2 inhibitor LNF2 (200 aa).

An N-terminal signal peptide occupies residues 1 to 19; it reads MKSLHTICLLFIFVARGNS. 8 cysteine pairs are disulfide-bonded: Cys22-Cys46, Cys25-Cys32, Cys39-Cys67, Cys73-Cys94, Cys95-Cys100, Cys118-Cys143, Cys136-Cys165, and Cys169-Cys191. Asn176 is a glycosylation site (N-linked (GlcNAc...) asparagine).

This sequence belongs to the CNF-like-inhibitor family. In terms of assembly, occurs as a mixture of oligomers. Tetrameric arrangement appears to be the predominant quaternary structure. As to expression, expressed by the liver.

It is found in the secreted. Functionally, inhibits the enzymatic activity of phospholipase A2 (PA2). The protein is Phospholipase A2 inhibitor LNF2 of Lachesis muta muta (Bushmaster).